Reading from the N-terminus, the 930-residue chain is Isoleucine--tRNA ligase (930 aa).

The 'HIGH' region motif lies at 57–67 (PYANGNIHVGH). Glu-554 contributes to the L-isoleucyl-5'-AMP binding site. Residues 595–599 (KMSKS) carry the 'KMSKS' region motif. Lys-598 contributes to the ATP binding site. The Zn(2+) site is built by Cys-888, Cys-891, Cys-908, and Cys-911.

The protein belongs to the class-I aminoacyl-tRNA synthetase family. IleS type 1 subfamily. In terms of assembly, monomer. Zn(2+) serves as cofactor.

The protein resides in the cytoplasm. The catalysed reaction is tRNA(Ile) + L-isoleucine + ATP = L-isoleucyl-tRNA(Ile) + AMP + diphosphate. Catalyzes the attachment of isoleucine to tRNA(Ile). As IleRS can inadvertently accommodate and process structurally similar amino acids such as valine, to avoid such errors it has two additional distinct tRNA(Ile)-dependent editing activities. One activity is designated as 'pretransfer' editing and involves the hydrolysis of activated Val-AMP. The other activity is designated 'posttransfer' editing and involves deacylation of mischarged Val-tRNA(Ile). The chain is Isoleucine--tRNA ligase from Streptococcus gordonii (strain Challis / ATCC 35105 / BCRC 15272 / CH1 / DL1 / V288).